Consider the following 364-residue polypeptide: Putative agmatine deiminase 1 (364 aa).

Cysteine 356 serves as the catalytic Amidino-cysteine intermediate.

Belongs to the agmatine deiminase family.

It carries out the reaction agmatine + H2O = N-carbamoylputrescine + NH4(+). This is Putative agmatine deiminase 1 from Listeria monocytogenes serotype 4b (strain F2365).